The following is an 825-amino-acid chain: Actin filament-associated protein 1-like 2 (825 aa).

Residue Y56 is modified to Phosphotyrosine. The segment at 62–163 is disordered; it reads VNGEQNSASP…SKGKAAPYQW (102 aa). Positions 80-94 are enriched in polar residues; sequence PLTNGEPSQHSSAPQ. A Phosphothreonine modification is found at T113. 2 PH domains span residues 175–271 and 353–447; these read DARI…EVSG and SLET…SESG. S408 is modified (phosphoserine). Residue Y413 is modified to Phosphotyrosine. S484 is subject to Phosphoserine. Residues 571-614 form a disordered region; that stretch reads TLTVDPKPGTTPEEPHTESPGDPEVQQRQPEVQESSEPIEPTPR. A compositionally biased stretch (low complexity) spans 593–608; that stretch reads PEVQQRQPEVQESSEP. A coiled-coil region spans residues 657-754; that stretch reads AEIKLGKNRT…VKDNLKKAEA (98 aa). The segment at 757-801 is disordered; it reads VTLGTTVDTTHLDNMSPRPQPKAATPNPPPDSTPVNSASVLKNRP. A compositionally biased stretch (polar residues) spans 759 to 769; it reads LGTTVDTTHLD.

In terms of assembly, interacts with SRC. Interacts with LCK when tyrosine phosphorylated. Post-translationally, tyrosine phosphorylated (by SRC).

Its subcellular location is the cytoplasm. Functionally, may play a role in a signaling cascade by enhancing the kinase activity of SRC. Contributes to SRC-regulated transcription activation. The protein is Actin filament-associated protein 1-like 2 (Afap1l2) of Mus musculus (Mouse).